The sequence spans 313 residues: Tetraspanning orphan receptor (313 aa).

The Extracellular segment spans residues 1 to 54 (PQCESETNFHYDIPPGYKDDVLVDVNNMSPSLVSDTQKHERGSHEVKIKHFSPY). A helical membrane pass occupies residues 55 to 75 (IAVCVTTFSLAFCCFMVHAAI). Residues 76–82 (TRQPTHL) are Cytoplasmic-facing. Residues 83–103 (LPFFFIQVFDLIICLIHILGF) form a helical membrane-spanning segment. The Extracellular portion of the chain corresponds to 104–129 (MSSTSDIRLVIHTKTGPIYIKSTGLT). A helical membrane pass occupies residues 130-150 (FIILSISCMMLAFKAYCLGMV). Residues 151-313 (WDCYKYLMLN…NASSNAHSSC (163 aa)) are Cytoplasmic-facing. Disordered stretches follow at residues 192–218 (NNSI…YDPA) and 279–313 (NTNT…HSSC). The span at 279-295 (NTNTSTTTSVISPLTTT) shows a compositional bias: low complexity. The segment covering 301–313 (QINNASSNAHSSC) has biased composition (polar residues).

As to quaternary structure, interacts (via N-terminal extracellular domain) with human C2a. Phosphorylated on tyrosine residues.

It localises to the cell membrane. Functionally, cell surface receptor that binds to human complement C2a protein. This results in inhibition of the classical and lectin pathways of complement activation, probably due to interference with binding of C2a to C4b and interference with cleavage by C1 or MASP2 such that C3 convertase cannot be formed. This infers resistance to complement-mediated cell lysis, allowing parasite survival and infection. This is Tetraspanning orphan receptor from Schistosoma haematobium (Blood fluke).